The primary structure comprises 288 residues: MFILPPPQEALLGAHTSAAGGLHNALYEGRDIGATTVQLFTANQRQWKRRTLTQEMVDQFRIALNETSLSYIMSHAGYLNNPGAPNPEILEKTRVCMHQEIADCISLGISFVNFHPGAALSDSKESCLDRTIASFSQMAPLFENNPPLVVLLETTAGQGSLIGSSFEELAYLIQGIKAHIPIGVCLDTCHIFAAGYDISSVAGWEQVLKHFDAVIGLSFLRAIHLNDSVFALGKNKDRHAPIGEGCIGSDSFCFLMQDERTRMLPKYLETPGGPDLWTKEIRYLQKVC.

The Zn(2+) site is built by His75, His115, Glu153, Asp187, His190, His224, Asp237, His239, and Glu269.

This sequence belongs to the AP endonuclease 2 family. Zn(2+) serves as cofactor.

The catalysed reaction is Endonucleolytic cleavage to 5'-phosphooligonucleotide end-products.. In terms of biological role, endonuclease IV plays a role in DNA repair. It cleaves phosphodiester bonds at apurinic or apyrimidinic (AP) sites, generating a 3'-hydroxyl group and a 5'-terminal sugar phosphate. In Chlamydia trachomatis serovar A (strain ATCC VR-571B / DSM 19440 / HAR-13), this protein is Probable endonuclease 4.